Reading from the N-terminus, the 122-residue chain is Truncated CrmB protein (122 aa).

In terms of biological role, the protein is truncated in this strain and presumably inactive. It has similarities with variola virus CrmB, but the product is inactivated due to several premature stop codons. The sequence is that of Truncated CrmB protein (OPG002) from Bos taurus (Bovine).